The primary structure comprises 1391 residues: DNA-directed RNA polymerase subunit beta' (1391 aa).

4 residues coordinate Zn(2+): Cys72, Cys74, Cys87, and Cys90. Residues Asp462, Asp464, and Asp466 each coordinate Mg(2+). Zn(2+) is bound by residues Cys816, Cys890, Cys897, and Cys900.

Belongs to the RNA polymerase beta' chain family. The RNAP catalytic core consists of 2 alpha, 1 beta, 1 beta' and 1 omega subunit. When a sigma factor is associated with the core the holoenzyme is formed, which can initiate transcription. Mg(2+) serves as cofactor. Zn(2+) is required as a cofactor.

The enzyme catalyses RNA(n) + a ribonucleoside 5'-triphosphate = RNA(n+1) + diphosphate. Functionally, DNA-dependent RNA polymerase catalyzes the transcription of DNA into RNA using the four ribonucleoside triphosphates as substrates. The protein is DNA-directed RNA polymerase subunit beta' of Neisseria gonorrhoeae (strain ATCC 700825 / FA 1090).